Reading from the N-terminus, the 369-residue chain is Dual specificity protein phosphatase 1-B (369 aa).

The Rhodanese domain maps to 21–138 (RAHKCLILDC…FSSQCPEFCN (118 aa)). Thr168 is subject to Phosphothreonine; by MAPK1. A Tyrosine-protein phosphatase domain is found at 175–316 (GPVEILPFLY…LLQFESQVLA (142 aa)). The Phosphocysteine intermediate role is filled by Cys260.

It belongs to the protein-tyrosine phosphatase family. Non-receptor class dual specificity subfamily. In terms of processing, phosphorylated by MAPK1/ERK2 at Thr-168 and at one or more serine residues in a progesterone-dependent manner. Phosphorylation reduces its rate of degradation but does not seem to affect phosphatase activity.

Its subcellular location is the nucleus. The enzyme catalyses O-phospho-L-seryl-[protein] + H2O = L-seryl-[protein] + phosphate. It carries out the reaction O-phospho-L-threonyl-[protein] + H2O = L-threonyl-[protein] + phosphate. It catalyses the reaction O-phospho-L-tyrosyl-[protein] + H2O = L-tyrosyl-[protein] + phosphate. Functionally, dual specificity phosphatase that dephosphorylates MAP kinase MAPK1/ERK2 on both 'Thr-188' and 'Tyr-190', regulating its activity during the meiotic cell cycle. This is Dual specificity protein phosphatase 1-B from Xenopus laevis (African clawed frog).